The sequence spans 1137 residues: Voltage-dependent calcium channel subunit alpha-2/delta-4 (1137 aa).

An N-terminal signal peptide occupies residues Met-1–Pro-19. Residues Ala-20 to Thr-1115 are Extracellular-facing. Asn-201 is a glycosylation site (N-linked (GlcNAc...) asparagine). The region spanning Asp-291–Leu-473 is the VWFA domain. Residues Asp-297, Ser-299, and Ser-301 each coordinate a divalent metal cation. An MIDAS-like motif motif is present at residues Asp-297 to Ser-301. Cys-447 and Cys-1097 are joined by a disulfide. One can recognise a Cache domain in the interval Trp-487–Leu-580. An N-linked (GlcNAc...) asparagine glycan is attached at Asn-664. Residues Ser-1116–Leu-1136 form a helical membrane-spanning segment. Position 1137 (Arg-1137) is a topological domain, cytoplasmic.

It belongs to the calcium channel subunit alpha-2/delta family. Dimer formed of alpha-2-2 and delta-2 chains; disulfide-linked. Voltage-dependent calcium channels are multisubunit complexes, consisting of alpha-1 (CACNA1), alpha-2 (CACNA2D), beta (CACNB) and delta (CACNA2D) subunits in a 1:1:1:1 ratio. Interacts with CACNA1C and CACNB3. In terms of processing, may be proteolytically processed into subunits alpha-2-4 and delta-4 that are disulfide-linked. It is however unclear whether such cleavage really takes place in vivo and has a functional role. In terms of tissue distribution, predominantly expressed in certain types of endocrine cells. Present in the Paneth cells of the small intestine. Also present in the erythroblasts in the fetal liver, in the cells of the zona reticularis of the adrenal gland and in the basophils of the pituitary. Present at low level in some brain regions such as the cerebellum (at protein level).

It localises to the membrane. Functionally, the alpha-2/delta subunit of voltage-dependent calcium channels regulates calcium current density and activation/inactivation kinetics of the calcium channel. The polypeptide is Voltage-dependent calcium channel subunit alpha-2/delta-4 (CACNA2D4) (Homo sapiens (Human)).